Reading from the N-terminus, the 158-residue chain is 6,7-dimethyl-8-ribityllumazine synthase (158 aa).

5-amino-6-(D-ribitylamino)uracil-binding positions include F24, 62–64 (CFE), and 86–88 (AVI). 91 to 92 (DT) contacts (2S)-2-hydroxy-3-oxobutyl phosphate. Catalysis depends on H94, which acts as the Proton donor. F119 contacts 5-amino-6-(D-ribitylamino)uracil. Residue R133 participates in (2S)-2-hydroxy-3-oxobutyl phosphate binding.

The protein belongs to the DMRL synthase family.

It carries out the reaction (2S)-2-hydroxy-3-oxobutyl phosphate + 5-amino-6-(D-ribitylamino)uracil = 6,7-dimethyl-8-(1-D-ribityl)lumazine + phosphate + 2 H2O + H(+). The protein operates within cofactor biosynthesis; riboflavin biosynthesis; riboflavin from 2-hydroxy-3-oxobutyl phosphate and 5-amino-6-(D-ribitylamino)uracil: step 1/2. Functionally, catalyzes the formation of 6,7-dimethyl-8-ribityllumazine by condensation of 5-amino-6-(D-ribitylamino)uracil with 3,4-dihydroxy-2-butanone 4-phosphate. This is the penultimate step in the biosynthesis of riboflavin. This Picosynechococcus sp. (strain ATCC 27264 / PCC 7002 / PR-6) (Agmenellum quadruplicatum) protein is 6,7-dimethyl-8-ribityllumazine synthase.